Consider the following 248-residue polypeptide: Ras-like protein family member 11B (248 aa).

The segment at 29–246 (AGRRLVKIAV…ALSAKVRTVT (218 aa)) is small GTPase-like. GTP contacts are provided by residues 40 to 47 (GASGVGKT), 87 to 91 (DTPGI), and 152 to 155 (NKAD). A disordered region spans residues 205-229 (QQPSGTPEKRRTSLIPRPKSPNMQD).

The protein belongs to the small GTPase superfamily. Ras family.

The enzyme catalyses GTP + H2O = GDP + phosphate + H(+). The sequence is that of Ras-like protein family member 11B from Bos taurus (Bovine).